Consider the following 239-residue polypeptide: ATP-dependent dethiobiotin synthetase BioD (239 aa).

Residue 15–20 (EIGKTF) coordinates ATP. Thr-19 provides a ligand contact to Mg(2+). Lys-40 is a catalytic residue. ATP is bound by residues Asp-57, 118–121 (EGAG), and 178–179 (NH). 2 residues coordinate Mg(2+): Asp-57 and Glu-118.

This sequence belongs to the dethiobiotin synthetase family. In terms of assembly, homodimer. The cofactor is Mg(2+).

The protein localises to the cytoplasm. It catalyses the reaction (7R,8S)-7,8-diammoniononanoate + CO2 + ATP = (4R,5S)-dethiobiotin + ADP + phosphate + 3 H(+). It functions in the pathway cofactor biosynthesis; biotin biosynthesis; biotin from 7,8-diaminononanoate: step 1/2. Catalyzes a mechanistically unusual reaction, the ATP-dependent insertion of CO2 between the N7 and N8 nitrogen atoms of 7,8-diaminopelargonic acid (DAPA, also called 7,8-diammoniononanoate) to form a ureido ring. In Burkholderia lata (strain ATCC 17760 / DSM 23089 / LMG 22485 / NCIMB 9086 / R18194 / 383), this protein is ATP-dependent dethiobiotin synthetase BioD.